Consider the following 324-residue polypeptide: DNA-directed RNA polymerase subunit alpha (324 aa).

The tract at residues 1–230 is alpha N-terminal domain (alpha-NTD); the sequence is MQSSGLLKPR…EQLSVFADLE (230 aa). Residues 244 to 324 are alpha C-terminal domain (alpha-CTD); the sequence is VDPVLLRPVD…NWPPAGLEKA (81 aa).

The protein belongs to the RNA polymerase alpha chain family. Homodimer. The RNAP catalytic core consists of 2 alpha, 1 beta, 1 beta' and 1 omega subunit. When a sigma factor is associated with the core the holoenzyme is formed, which can initiate transcription.

It carries out the reaction RNA(n) + a ribonucleoside 5'-triphosphate = RNA(n+1) + diphosphate. DNA-dependent RNA polymerase catalyzes the transcription of DNA into RNA using the four ribonucleoside triphosphates as substrates. This chain is DNA-directed RNA polymerase subunit alpha, found in Dechloromonas aromatica (strain RCB).